Here is a 373-residue protein sequence, read N- to C-terminus: tRNA-specific 2-thiouridylase MnmA (373 aa).

ATP contacts are provided by residues 12-19 (GMSGGVDS) and Met38. The interaction with target base in tRNA stretch occupies residues 98–100 (NPD). The active-site Nucleophile is Cys103. A disulfide bridge links Cys103 with Cys200. Gly127 lines the ATP pocket. The segment at 150 to 152 (KDQ) is interaction with tRNA. Cys200 (cysteine persulfide intermediate) is an active-site residue. An interaction with tRNA region spans residues 312-313 (RY).

Belongs to the MnmA/TRMU family.

The protein resides in the cytoplasm. The catalysed reaction is S-sulfanyl-L-cysteinyl-[protein] + uridine(34) in tRNA + AH2 + ATP = 2-thiouridine(34) in tRNA + L-cysteinyl-[protein] + A + AMP + diphosphate + H(+). Functionally, catalyzes the 2-thiolation of uridine at the wobble position (U34) of tRNA, leading to the formation of s(2)U34. The polypeptide is tRNA-specific 2-thiouridylase MnmA (Streptococcus mutans serotype c (strain ATCC 700610 / UA159)).